The sequence spans 1163 residues: NACHT, LRR and PYD domains-containing protein 5 (1163 aa).

3 stretches are compositionally biased toward basic and acidic residues: residues 1–42 (MGPP…KDQG), 56–94 (PEKE…KDQG), and 108–127 (PEKD…EQKS). The interval 1–201 (MGPPEKESKA…TEADKDNGGD (201 aa)) is disordered. The segment covering 128–137 (ESTMSPSENV) has biased composition (polar residues). The span at 153–173 (ASERKMTSPENDSKSIQKDQG) shows a compositional bias: basic and acidic residues. An NACHT domain is found at 243–565 (HTIILHGRPG…AALYYVLEGL (323 aa)). 249-256 (GRPGVGKS) is an ATP binding site. 11 LRR repeats span residues 801-822 (NLKY…LACE), 830-851 (SVET…MIST), 858-878 (RLKC…ISLG), 887-906 (LLQK…CHLL), 915-935 (NLTH…QQLC), 944-964 (ALQR…GFLA), 972-993 (KLTH…LLCE), 1001-1022 (YLQE…DLAC), 1029-1050 (HLKS…TLCE), 1058-1079 (SLRR…ALSL), and 1086-1107 (HLNS…KLCS).

It belongs to the NLRP family. In terms of assembly, component of the subcortical maternal complex (SCMC), at least composed of NLRP5, KHDC3, OOEP, and TLE6. Within the complex, interacts with OOEP, KHDC3 and TLE6. The SCMC may facilitate translocation of its components between the nuclear and cytoplasmic compartments. As part of the SCMC interacts with the SCMC-associated protein ZBED3. As part of the SCMC interacts with the SCMC-associated protein CFL1/Cofilin-1. Interacts with PRKCE. Interacts with TUBB3 at cytoskeleton microtubules. Post-translationally, phosphorylated by PRKCE.

The protein resides in the cytoplasm. Its subcellular location is the cytoplasmic vesicle. It localises to the secretory vesicle. It is found in the cortical granule. The protein localises to the mitochondrion. The protein resides in the nucleus. Its subcellular location is the nucleolus. It localises to the golgi apparatus. In terms of biological role, component of the subcortical maternal complex (SCMC), a multiprotein complex that plays a key role in early embryonic development. The SCMC complex is a structural constituent of cytoplasmic lattices, which consist in fibrous structures found in the cytoplasm of oocytes and preimplantation embryos. They are required to store maternal proteins critical for embryonic development, such as proteins that control epigenetic reprogramming of the preimplantation embryo, and prevent their degradation or activation. Required for the localization of cortical granules to the cortex of oocytes, via association with the cortical actin scaffold. Required for cortical actin clearance prior to oocyte exocytosis and prevention of polyspermy. Involved in regulating post-fertilization Ca(2+) release and endoplasmic reticulum storage (ER) storage via regulation of cellular localization. May be involved in the localization of mitochondria to the cytoplasm and perinuclear region in oocytes and early stage embryos, independent of its role in CPL formation. The sequence is that of NACHT, LRR and PYD domains-containing protein 5 from Mus musculus (Mouse).